The primary structure comprises 960 residues: Lon protease homolog, mitochondrial (960 aa).

The transit peptide at 1-56 (MYRAGALVLRSATLRRTRFLAAHQNFATISSQRSSVLLAKSLESSIGGAGNQKKFY) directs the protein to the mitochondrion. One can recognise a Lon N-terminal domain in the interval 92–352 (VPILAINRYP…IALLLIQKEK (261 aa)). A disordered region spans residues 195–250 (PKTDTPLNGRRARGKRAGLPPTPPPTPPLSTPTSAPEASATSPEEKEEKKDPERKG). The span at 214-224 (PPTPPPTPPLS) shows a compositional bias: pro residues. Residues 225–236 (TPTSAPEASATS) show a composition bias toward low complexity. The span at 237–250 (PEEKEEKKDPERKG) shows a compositional bias: basic and acidic residues. 505–512 (GPPGVGKT) is a binding site for ATP. The interval 712 to 748 (EQQPEDEQPAATTAISENSDAEPVSTPSDPPTFTPEK) is disordered. A Lon proteolytic domain is found at 773 to 960 (VTPPGVIMGL…YDELYEHLFQ (188 aa)). Residues serine 867 and lysine 910 contribute to the active site.

This sequence belongs to the peptidase S16 family. In terms of assembly, homohexamer or homoheptamer. Organized in a ring with a central cavity.

The protein resides in the mitochondrion matrix. The enzyme catalyses Hydrolysis of proteins in presence of ATP.. ATP-dependent serine protease that mediates the selective degradation of misfolded, unassembled or oxidatively damaged polypeptides as well as certain short-lived regulatory proteins in the mitochondrial matrix. May also have a chaperone function in the assembly of inner membrane protein complexes. Participates in the regulation of mitochondrial gene expression and in the maintenance of the integrity of the mitochondrial genome. Binds to mitochondrial DNA in a site-specific manner. This is Lon protease homolog, mitochondrial from Caenorhabditis briggsae.